The chain runs to 444 residues: UDP-N-acetylglucosamine 1-carboxyvinyltransferase (444 aa).

A phosphoenolpyruvate-binding site is contributed by 22 to 23 (KN). Residue Arg94 coordinates UDP-N-acetyl-alpha-D-glucosamine. Catalysis depends on Asp119, which acts as the Proton donor. Residues Asp309 and Val331 each contribute to the UDP-N-acetyl-alpha-D-glucosamine site.

The protein belongs to the EPSP synthase family. MurA subfamily.

The protein resides in the cytoplasm. The enzyme catalyses phosphoenolpyruvate + UDP-N-acetyl-alpha-D-glucosamine = UDP-N-acetyl-3-O-(1-carboxyvinyl)-alpha-D-glucosamine + phosphate. It functions in the pathway cell wall biogenesis; peptidoglycan biosynthesis. Functionally, cell wall formation. Adds enolpyruvyl to UDP-N-acetylglucosamine. In Chlamydia abortus (strain DSM 27085 / S26/3) (Chlamydophila abortus), this protein is UDP-N-acetylglucosamine 1-carboxyvinyltransferase.